A 242-amino-acid chain; its full sequence is 2-C-methyl-D-erythritol 4-phosphate cytidylyltransferase (242 aa).

Belongs to the IspD/TarI cytidylyltransferase family. IspD subfamily.

It carries out the reaction 2-C-methyl-D-erythritol 4-phosphate + CTP + H(+) = 4-CDP-2-C-methyl-D-erythritol + diphosphate. It functions in the pathway isoprenoid biosynthesis; isopentenyl diphosphate biosynthesis via DXP pathway; isopentenyl diphosphate from 1-deoxy-D-xylulose 5-phosphate: step 2/6. In terms of biological role, catalyzes the formation of 4-diphosphocytidyl-2-C-methyl-D-erythritol from CTP and 2-C-methyl-D-erythritol 4-phosphate (MEP). The chain is 2-C-methyl-D-erythritol 4-phosphate cytidylyltransferase from Vesicomyosocius okutanii subsp. Calyptogena okutanii (strain HA).